A 944-amino-acid polypeptide reads, in one-letter code: Isoleucine--tRNA ligase (944 aa).

Residues 58–68 (PYANGQIHIGH) carry the 'HIGH' region motif. Glu-568 is a binding site for L-isoleucyl-5'-AMP. The short motif at 609–613 (KMSKS) is the 'KMSKS' region element. Lys-612 provides a ligand contact to ATP. Residues Cys-907, Cys-910, Cys-927, and Cys-930 each coordinate Zn(2+).

The protein belongs to the class-I aminoacyl-tRNA synthetase family. IleS type 1 subfamily. Monomer. Requires Zn(2+) as cofactor.

The protein resides in the cytoplasm. The catalysed reaction is tRNA(Ile) + L-isoleucine + ATP = L-isoleucyl-tRNA(Ile) + AMP + diphosphate. Functionally, catalyzes the attachment of isoleucine to tRNA(Ile). As IleRS can inadvertently accommodate and process structurally similar amino acids such as valine, to avoid such errors it has two additional distinct tRNA(Ile)-dependent editing activities. One activity is designated as 'pretransfer' editing and involves the hydrolysis of activated Val-AMP. The other activity is designated 'posttransfer' editing and involves deacylation of mischarged Val-tRNA(Ile). The polypeptide is Isoleucine--tRNA ligase (Idiomarina loihiensis (strain ATCC BAA-735 / DSM 15497 / L2-TR)).